A 154-amino-acid chain; its full sequence is Transcriptional repressor NrdR (154 aa).

A zinc finger lies at 3–34 (CPFCNAPDTKVIDSRLATEGAQVRRRRECMSC). The ATP-cone domain maps to 49 to 139 (PRVIKSDGNR…VYRSFQDVNA (91 aa)).

Belongs to the NrdR family. Zn(2+) is required as a cofactor.

Negatively regulates transcription of bacterial ribonucleotide reductase nrd genes and operons by binding to NrdR-boxes. The sequence is that of Transcriptional repressor NrdR from Hydrogenovibrio crunogenus (strain DSM 25203 / XCL-2) (Thiomicrospira crunogena).